A 667-amino-acid polypeptide reads, in one-letter code: DNA ligase (667 aa).

NAD(+)-binding positions include 32-36 (DSEYD), 81-82 (SL), and E110. Residue K112 is the N6-AMP-lysine intermediate of the active site. The NAD(+) site is built by R133, E167, K283, and K307. C401, C404, C419, and C424 together coordinate Zn(2+). The 82-residue stretch at 586–667 (EGHPEFSGKT…FVDKQNELNS (82 aa)) folds into the BRCT domain.

The protein belongs to the NAD-dependent DNA ligase family. LigA subfamily. Mg(2+) serves as cofactor. Requires Mn(2+) as cofactor.

The catalysed reaction is NAD(+) + (deoxyribonucleotide)n-3'-hydroxyl + 5'-phospho-(deoxyribonucleotide)m = (deoxyribonucleotide)n+m + AMP + beta-nicotinamide D-nucleotide.. In terms of biological role, DNA ligase that catalyzes the formation of phosphodiester linkages between 5'-phosphoryl and 3'-hydroxyl groups in double-stranded DNA using NAD as a coenzyme and as the energy source for the reaction. It is essential for DNA replication and repair of damaged DNA. The chain is DNA ligase from Staphylococcus aureus (strain MRSA252).